The following is a 202-amino-acid chain: U-Kazal-Dg21.2 (202 aa).

The N-terminal stretch at 1-20 (MKYFLWSAVTIFAIVNVVGA) is a signal peptide. A propeptide spanning residues 21–87 (KNSDFDPRCL…SFCQVEEDFD (67 aa)) is cleaved from the precursor. 3 Kazal-like domains span residues 23–77 (SDFD…KTLM), 85–140 (DFDS…ICRN), and 148–202 (IDPK…KGEC). 5 disulfides stabilise this stretch: Cys-29–Cys-62, Cys-33–Cys-55, Cys-91–Cys-124, Cys-95–Cys-117, and Cys-103–Cys-138. N-linked (GlcNAc...) asparagine glycosylation is present at Asn-140. A propeptide spanning residues 142 to 202 (SFKSELIDPK…NWTLIRKGEC (61 aa)) is cleaved from the precursor. 3 disulfides stabilise this stretch: Cys-154-Cys-187, Cys-158-Cys-180, and Cys-166-Cys-202. An N-linked (GlcNAc...) asparagine glycan is attached at Asn-193.

Expressed by the venom gland.

Its subcellular location is the secreted. In terms of biological role, may act as a serine protease inhibitor, since it possess the kazal serine protease inhibitor signature. The recombinant peptide does not produce toxic effects on insects. In Dolopus genitalis (Giant Australian assassin fly), this protein is U-Kazal-Dg21.2.